The chain runs to 462 residues: Cathepsin F (462 aa).

The signal sequence occupies residues 1-19; it reads MAPLLQLLWLLTLLSTVAL. Positions 20-248 are cleaved as a propeptide — activation peptide; the sequence is SPVPAKPWAD…MSPAKSINDL (229 aa). N-linked (GlcNAc...) asparagine glycosylation is found at N35, N138, and N173. 2 cysteine pairs are disulfide-bonded: C270–C311 and C304–C344. C273 is an active-site residue. N-linked (GlcNAc...) asparagine glycosylation is found at N345 and N356. C402 and C450 are disulfide-bonded. H409 is a catalytic residue. The N-linked (GlcNAc...) asparagine glycan is linked to N418. Residue N429 is part of the active site.

Belongs to the peptidase C1 family.

It localises to the lysosome. The enzyme catalyses The recombinant enzyme cleaves synthetic substrates with Phe and Leu (better than Val) in P2, with high specificity constant (kcat/Km) comparable to that of cathepsin L.. In terms of biological role, thiol protease which is believed to participate in intracellular degradation and turnover of proteins. Has also been implicated in tumor invasion and metastasis. The polypeptide is Cathepsin F (Ctsf) (Mus musculus (Mouse)).